Consider the following 148-residue polypeptide: MAIANNKKAFHDFFIEDRIEAGLVLEGWEVKAIRAARVQLKESYIYWKKDAFYLVGCHITALPTASTHIKPDAVRPRKLLLNQSEINKLIGKTERAGYTIVPLDLHFSRGKIKMEIGLAKGKKQHDKRQSMKEADWKREKQRLIKHTR.

The disordered stretch occupies residues 119 to 148; that stretch reads AKGKKQHDKRQSMKEADWKREKQRLIKHTR. The segment covering 127–142 has biased composition (basic and acidic residues); sequence KRQSMKEADWKREKQR.

It belongs to the SmpB family.

The protein localises to the cytoplasm. Functionally, required for rescue of stalled ribosomes mediated by trans-translation. Binds to transfer-messenger RNA (tmRNA), required for stable association of tmRNA with ribosomes. tmRNA and SmpB together mimic tRNA shape, replacing the anticodon stem-loop with SmpB. tmRNA is encoded by the ssrA gene; the 2 termini fold to resemble tRNA(Ala) and it encodes a 'tag peptide', a short internal open reading frame. During trans-translation Ala-aminoacylated tmRNA acts like a tRNA, entering the A-site of stalled ribosomes, displacing the stalled mRNA. The ribosome then switches to translate the ORF on the tmRNA; the nascent peptide is terminated with the 'tag peptide' encoded by the tmRNA and targeted for degradation. The ribosome is freed to recommence translation, which seems to be the essential function of trans-translation. The protein is SsrA-binding protein of Neisseria meningitidis serogroup C (strain 053442).